The primary structure comprises 244 residues: Putative quercetin 2,3-dioxygenase Mb0187c (244 aa).

The a divalent metal cation site is built by H60, H62, H104, and E106.

It belongs to the pirin family. A divalent metal cation is required as a cofactor.

It carries out the reaction quercetin + O2 = 2-(3,4-dihydroxybenzoyloxy)-4,6-dihydroxybenzoate + CO. The protein operates within flavonoid metabolism; quercetin degradation. Functionally, putative quercetin 2,3-dioxygenase. This is Putative quercetin 2,3-dioxygenase Mb0187c from Mycobacterium bovis (strain ATCC BAA-935 / AF2122/97).